Consider the following 566-residue polypeptide: Beta-1,2-xylosyltransferease XAX1 (566 aa).

Residues 1 to 25 (MTSTAYSRPSKLPGGGNGSDRRLPP) are disordered. Residues 1–43 (MTSTAYSRPSKLPGGGNGSDRRLPPRLMRGLTTKIEPKKLGVG) are Cytoplasmic-facing. The chain crosses the membrane as a helical; Signal-anchor for type II membrane protein span at residues 44–64 (LLAGCCLALLTYVSLAKLFAI). The Lumenal segment spans residues 65–566 (YSPVFASTAN…LLQALDRLQQ (502 aa)). Residue Asn74 is glycosylated (N-linked (GlcNAc...) asparagine). A disordered region spans residues 78–180 (LMQNSPPSSP…AAGGDTKIKC (103 aa)). Over residues 84–94 (PSSPETGPIPP) the composition is skewed to pro residues. N-linked (GlcNAc...) asparagine glycosylation is found at Asn104, Asn368, Asn429, Asn515, and Asn549.

It belongs to the glycosyltransferase 61 family. Highly expressed in young panicles.

The protein resides in the golgi apparatus membrane. The protein operates within glycan metabolism. Functionally, glycosyltransferase involved in the xylosylation of xylan, the major hemicellulose (non-cellulosic component) of primary and secondary walls of angiosperms. Possesses beta-1,2-xylosyltransferase activity, transferring xylose from UDP-xylose to the xylan backbone. The sequence is that of Beta-1,2-xylosyltransferease XAX1 from Oryza sativa subsp. japonica (Rice).